A 339-amino-acid polypeptide reads, in one-letter code: D-erythrose-4-phosphate dehydrogenase (339 aa).

11–12 provides a ligand contact to NAD(+); it reads RI. Substrate contacts are provided by residues 153–155, Arg-199, 212–213, and Arg-235; these read SCT and TK. Cys-154 acts as the Nucleophile in catalysis. Asn-317 is a binding site for NAD(+).

Belongs to the glyceraldehyde-3-phosphate dehydrogenase family. Epd subfamily. In terms of assembly, homotetramer.

It localises to the cytoplasm. The catalysed reaction is D-erythrose 4-phosphate + NAD(+) + H2O = 4-phospho-D-erythronate + NADH + 2 H(+). It functions in the pathway cofactor biosynthesis; pyridoxine 5'-phosphate biosynthesis; pyridoxine 5'-phosphate from D-erythrose 4-phosphate: step 1/5. Its function is as follows. Catalyzes the NAD-dependent conversion of D-erythrose 4-phosphate to 4-phosphoerythronate. The polypeptide is D-erythrose-4-phosphate dehydrogenase (Shewanella frigidimarina (strain NCIMB 400)).